The sequence spans 543 residues: Chaperonin GroEL 2 (543 aa).

Residues 29–32, 86–90, Gly-413, 477–479, and Asp-493 contribute to the ATP site; these read TLGP, DGTTT, and DAA. Residues 523–543 form a disordered region; it reads PQEPEPAAGGHGHGHQHGPGF. A compositionally biased stretch (basic residues) spans 534 to 543; that stretch reads GHGHQHGPGF.

It belongs to the chaperonin (HSP60) family. Forms a cylinder of 14 subunits composed of two heptameric rings stacked back-to-back. Interacts with the co-chaperonin GroES.

It is found in the cytoplasm. It carries out the reaction ATP + H2O + a folded polypeptide = ADP + phosphate + an unfolded polypeptide.. Its function is as follows. Together with its co-chaperonin GroES, plays an essential role in assisting protein folding. The GroEL-GroES system forms a nano-cage that allows encapsulation of the non-native substrate proteins and provides a physical environment optimized to promote and accelerate protein folding. The chain is Chaperonin GroEL 2 from Salinispora tropica (strain ATCC BAA-916 / DSM 44818 / JCM 13857 / NBRC 105044 / CNB-440).